Here is a 249-residue protein sequence, read N- to C-terminus: Ribonuclease 3 (249 aa).

The 130-residue stretch at 20-149 (FKEFQERISV…FIGALYLDQG (130 aa)) folds into the RNase III domain. Mg(2+) is bound at residue glutamate 62. The active site involves aspartate 66. Mg(2+) is bound by residues aspartate 135 and glutamate 138. Glutamate 138 is a catalytic residue. Residues 175–244 (DFKSQLQEFV…AQEALAKMQK (70 aa)) enclose the DRBM domain. Residues 223-249 (NGRSKKEAEQHAAQEALAKMQKHHTKQ) are disordered.

The protein belongs to the ribonuclease III family. Homodimer. Requires Mg(2+) as cofactor.

Its subcellular location is the cytoplasm. The enzyme catalyses Endonucleolytic cleavage to 5'-phosphomonoester.. Its function is as follows. Digests double-stranded RNA. Involved in the processing of primary rRNA transcript to yield the immediate precursors to the large and small rRNAs (23S and 16S). Processes some mRNAs, and tRNAs when they are encoded in the rRNA operon. Processes pre-crRNA and tracrRNA of type II CRISPR loci if present in the organism. The chain is Ribonuclease 3 from Bacillus velezensis (strain DSM 23117 / BGSC 10A6 / LMG 26770 / FZB42) (Bacillus amyloliquefaciens subsp. plantarum).